A 122-amino-acid polypeptide reads, in one-letter code: Small ribosomal subunit protein uS13 (122 aa).

The interval 93–122 (RKGLPVRGQTTKNNARTRKGKRKTVGSASK) is disordered. Basic residues predominate over residues 107 to 116 (ARTRKGKRKT).

This sequence belongs to the universal ribosomal protein uS13 family. As to quaternary structure, part of the 30S ribosomal subunit. Forms a loose heterodimer with protein S19. Forms two bridges to the 50S subunit in the 70S ribosome.

Located at the top of the head of the 30S subunit, it contacts several helices of the 16S rRNA. In the 70S ribosome it contacts the 23S rRNA (bridge B1a) and protein L5 of the 50S subunit (bridge B1b), connecting the 2 subunits; these bridges are implicated in subunit movement. Contacts the tRNAs in the A and P-sites. This chain is Small ribosomal subunit protein uS13, found in Wolinella succinogenes (strain ATCC 29543 / DSM 1740 / CCUG 13145 / JCM 31913 / LMG 7466 / NCTC 11488 / FDC 602W) (Vibrio succinogenes).